Here is a 375-residue protein sequence, read N- to C-terminus: Chaperone protein DnaJ (375 aa).

Positions 5–68 (DYYEILGVSK…KKRAQYDQFG (64 aa)) constitute a J domain. Residues 135–217 (GISKNINYDR…CYGKKVINER (83 aa)) form a CR-type zinc finger. Zn(2+) contacts are provided by C148, C151, C165, C168, C191, C194, C205, and C208. CXXCXGXG motif repeat units lie at residues 148–155 (CHKCQGTG), 165–172 (CTKCHGRG), 191–198 (CHECEGTG), and 205–212 (CEQCYGKK).

Belongs to the DnaJ family. In terms of assembly, homodimer. Zn(2+) is required as a cofactor.

Its subcellular location is the cytoplasm. Participates actively in the response to hyperosmotic and heat shock by preventing the aggregation of stress-denatured proteins and by disaggregating proteins, also in an autonomous, DnaK-independent fashion. Unfolded proteins bind initially to DnaJ; upon interaction with the DnaJ-bound protein, DnaK hydrolyzes its bound ATP, resulting in the formation of a stable complex. GrpE releases ADP from DnaK; ATP binding to DnaK triggers the release of the substrate protein, thus completing the reaction cycle. Several rounds of ATP-dependent interactions between DnaJ, DnaK and GrpE are required for fully efficient folding. Also involved, together with DnaK and GrpE, in the DNA replication of plasmids through activation of initiation proteins. The sequence is that of Chaperone protein DnaJ from Ureaplasma parvum serovar 3 (strain ATCC 700970).